We begin with the raw amino-acid sequence, 452 residues long: Pup--protein ligase (452 aa).

E9 lines the Mg(2+) pocket. R53 provides a ligand contact to ATP. Y55 contributes to the Mg(2+) binding site. Residue D57 is the Proton acceptor of the active site. E63 lines the Mg(2+) pocket. ATP is bound by residues T66 and W419.

Belongs to the Pup ligase/Pup deamidase family. Pup-conjugating enzyme subfamily.

It carries out the reaction ATP + [prokaryotic ubiquitin-like protein]-L-glutamate + [protein]-L-lysine = ADP + phosphate + N(6)-([prokaryotic ubiquitin-like protein]-gamma-L-glutamyl)-[protein]-L-lysine.. Its pathway is protein degradation; proteasomal Pup-dependent pathway. The protein operates within protein modification; protein pupylation. Catalyzes the covalent attachment of the prokaryotic ubiquitin-like protein modifier Pup to the proteasomal substrate proteins, thereby targeting them for proteasomal degradation. This tagging system is termed pupylation. The ligation reaction involves the side-chain carboxylate of the C-terminal glutamate of Pup and the side-chain amino group of a substrate lysine. The protein is Pup--protein ligase of Mycobacteroides abscessus (strain ATCC 19977 / DSM 44196 / CCUG 20993 / CIP 104536 / JCM 13569 / NCTC 13031 / TMC 1543 / L948) (Mycobacterium abscessus).